Here is a 906-residue protein sequence, read N- to C-terminus: Probable disease resistance RPP8-like protein 2 (906 aa).

Residues 15–68 (ELLSRESARLNGIDEQVDGLKRQLGRLQSLLKDADAKKNETERVRNFLEDVKDI) adopt a coiled-coil conformation. An NB-ARC domain is found at 144–454 (LQERQREIRQ…AEGIITPFHD (311 aa)). 190–197 (GMGGIGKT) is a binding site for ATP. 10 LRR repeats span residues 573 to 597 (LPLLRVLDLSYVQFEGGKLPSSIGD), 598 to 621 (LIHLRFLSLYEAGVSHLPSSLGNL), 623 to 644 (LLLCLNLGVADRLLVHVPNVLK), 646 to 671 (MQELRYLRLPRSMPAKTKLELGDLVN), 672 to 696 (LESLTNFSTKHGSVTDLLRMTKLSV), 704 to 727 (ECTFETLLLSLRELRNLETLSFHD), 740 to 766 (LLVLDFIHLKDLTLSMHLPRFPDQYRF), 767 to 790 (PPHLAHIWLIGCRMEEDPMPILEK), 791 to 818 (LLHLKSVYLSSGAFLGRRMVCSKGGFPQ), and 840 to 865 (MPCLRTLTIDNCKKLKQLPDGLKYVT).

The protein belongs to the disease resistance NB-LRR family. RPP8/HRT subfamily.

Potential disease resistance protein. The polypeptide is Probable disease resistance RPP8-like protein 2 (RPP8L2) (Arabidopsis thaliana (Mouse-ear cress)).